Reading from the N-terminus, the 474-residue chain is Protein nucleotidyltransferase YdiU (474 aa).

ATP contacts are provided by G89, G91, R92, K112, D124, G125, R175, and R182. The active-site Proton acceptor is the D256. N257 and D266 together coordinate Mg(2+). D266 contributes to the ATP binding site.

Belongs to the SELO family. The cofactor is Mg(2+). Mn(2+) is required as a cofactor.

It catalyses the reaction L-seryl-[protein] + ATP = 3-O-(5'-adenylyl)-L-seryl-[protein] + diphosphate. The catalysed reaction is L-threonyl-[protein] + ATP = 3-O-(5'-adenylyl)-L-threonyl-[protein] + diphosphate. The enzyme catalyses L-tyrosyl-[protein] + ATP = O-(5'-adenylyl)-L-tyrosyl-[protein] + diphosphate. It carries out the reaction L-histidyl-[protein] + UTP = N(tele)-(5'-uridylyl)-L-histidyl-[protein] + diphosphate. It catalyses the reaction L-seryl-[protein] + UTP = O-(5'-uridylyl)-L-seryl-[protein] + diphosphate. The catalysed reaction is L-tyrosyl-[protein] + UTP = O-(5'-uridylyl)-L-tyrosyl-[protein] + diphosphate. Its function is as follows. Nucleotidyltransferase involved in the post-translational modification of proteins. It can catalyze the addition of adenosine monophosphate (AMP) or uridine monophosphate (UMP) to a protein, resulting in modifications known as AMPylation and UMPylation. This is Protein nucleotidyltransferase YdiU from Corynebacterium glutamicum (strain ATCC 13032 / DSM 20300 / JCM 1318 / BCRC 11384 / CCUG 27702 / LMG 3730 / NBRC 12168 / NCIMB 10025 / NRRL B-2784 / 534).